Consider the following 257-residue polypeptide: Isoprenyl transferase (257 aa).

Asp33 is a catalytic residue. Mg(2+) is bound at residue Asp33. Substrate is bound by residues 34–37, Trp38, Arg46, His50, and 78–80; these read GNGR and STE. The active-site Proton acceptor is the Asn81. Substrate-binding positions include Trp82, Arg84, Arg204, and 210 to 212; that span reads RLS. Mg(2+) is bound at residue Glu223.

It belongs to the UPP synthase family. In terms of assembly, homodimer. Mg(2+) serves as cofactor.

Its function is as follows. Catalyzes the condensation of isopentenyl diphosphate (IPP) with allylic pyrophosphates generating different type of terpenoids. The polypeptide is Isoprenyl transferase (Clostridium acetobutylicum (strain ATCC 824 / DSM 792 / JCM 1419 / IAM 19013 / LMG 5710 / NBRC 13948 / NRRL B-527 / VKM B-1787 / 2291 / W)).